We begin with the raw amino-acid sequence, 353 residues long: MTIALGTFTKEENDLFDIMDDWLRRDRFVFVGWSGLLLFPCAYFALGGWFTGTTFVTSWYTHGLASSYLEGCNFLTAAVSTPANSLAHSLLLLWGPEAQGDFTRWCQLGGLWTFVALHGAFGLIGFMLRQFELARSVQLRPYNAIAFSGPIAVFVSVFLIYPLGQSGWFFAPSFGVAAIFRFILFFQGFHNWTLNPFHMMGVAGVLGAALLCAIHGATVENTLFEDGDGANTFRAFNPTQAEETYSMVTANRFWSQIFGVAFSNKRWLHFFMLFVPVTGLWMSAIGVVGLALNLRAYDFVSQEIRAAEDPEFETFYTKNILLNEGIRAWMAAQDQPHENLIFPEEVLPRGNAL.

Thr2 bears the N-acetylthreonine mark. Thr2 bears the Phosphothreonine mark. Residues 41–61 form a helical membrane-spanning segment; the sequence is CAYFALGGWFTGTTFVTSWYT. Residue His118 participates in chlorophyll a binding. The chain crosses the membrane as a helical span at residues 125 to 141; it reads GFMLRQFELARSVQLRP. 2 residues coordinate pheophytin a: Gln130 and Asn143. Residues 153 to 166 form a helical membrane-spanning segment; it reads VFVSVFLIYPLGQS. His198 is a binding site for chlorophyll a. A helical transmembrane segment spans residues 208–228; that stretch reads AALLCAIHGATVENTLFEDGD. 2 residues coordinate a plastoquinone: His215 and Phe262. His215 is a Fe cation binding site. His269 provides a ligand contact to Fe cation. The helical transmembrane segment at 279–295 threads the bilayer; it reads GLWMSAIGVVGLALNLR.

The protein belongs to the reaction center PufL/M/PsbA/D family. PSII is composed of 1 copy each of membrane proteins PsbA, PsbB, PsbC, PsbD, PsbE, PsbF, PsbH, PsbI, PsbJ, PsbK, PsbL, PsbM, PsbT, PsbX, PsbY, PsbZ, Psb30/Ycf12, at least 3 peripheral proteins of the oxygen-evolving complex and a large number of cofactors. It forms dimeric complexes. The D1/D2 heterodimer binds P680, chlorophylls that are the primary electron donor of PSII, and subsequent electron acceptors. It shares a non-heme iron and each subunit binds pheophytin, quinone, additional chlorophylls, carotenoids and lipids. There is also a Cl(-1) ion associated with D1 and D2, which is required for oxygen evolution. The PSII complex binds additional chlorophylls, carotenoids and specific lipids. is required as a cofactor.

Its subcellular location is the plastid. It is found in the chloroplast thylakoid membrane. The catalysed reaction is 2 a plastoquinone + 4 hnu + 2 H2O = 2 a plastoquinol + O2. Photosystem II (PSII) is a light-driven water:plastoquinone oxidoreductase that uses light energy to abstract electrons from H(2)O, generating O(2) and a proton gradient subsequently used for ATP formation. It consists of a core antenna complex that captures photons, and an electron transfer chain that converts photonic excitation into a charge separation. The D1/D2 (PsbA/PsbD) reaction center heterodimer binds P680, the primary electron donor of PSII as well as several subsequent electron acceptors. D2 is needed for assembly of a stable PSII complex. This Drimys granadensis protein is Photosystem II D2 protein.